The primary structure comprises 85 residues: Photosystem I reaction center subunit PsaK (85 aa).

A run of 2 helical transmembrane segments spans residues 12–34 (TVTW…IAVG) and 54–76 (GGMG…IGAI).

Belongs to the PsaG/PsaK family.

The protein resides in the cellular thylakoid membrane. This chain is Photosystem I reaction center subunit PsaK, found in Parasynechococcus marenigrum (strain WH8102).